The chain runs to 258 residues: Snake venom serine protease PA (258 aa).

An N-terminal signal peptide occupies residues 1–18 (MVLIRVLANLLILQLSYA). The propeptide occupies 19–24 (QKSPEL). Residues 25-249 (VVGGDECNIN…YNDWIKSIIA (225 aa)) enclose the Peptidase S1 domain. Cystine bridges form between Cys-31-Cys-163, Cys-50-Cys-66, Cys-98-Cys-256, Cys-142-Cys-210, Cys-174-Cys-189, and Cys-200-Cys-225. A glycan (N-linked (GlcNAc...) asparagine) is linked at Asn-44. Catalysis depends on charge relay system residues His-65 and Asp-110. Catalysis depends on Ser-204, which acts as the Charge relay system.

It belongs to the peptidase S1 family. Snake venom subfamily. Monomer. In terms of tissue distribution, expressed by the venom gland.

It is found in the secreted. Snake venom serine protease that may act in the hemostasis system of the prey. In Trimeresurus stejnegeri (Chinese green tree viper), this protein is Snake venom serine protease PA.